The sequence spans 292 residues: Diaminopimelate epimerase (292 aa).

Residues Asn14 and Asn81 each contribute to the substrate site. The Proton donor role is filled by Cys90. Substrate contacts are provided by residues 91–92 (GN), Asn166, Asn202, and 220–221 (ER). The active-site Proton acceptor is the Cys229. 230 to 231 (GT) contributes to the substrate binding site.

This sequence belongs to the diaminopimelate epimerase family. Homodimer.

It is found in the cytoplasm. It carries out the reaction (2S,6S)-2,6-diaminopimelate = meso-2,6-diaminopimelate. The protein operates within amino-acid biosynthesis; L-lysine biosynthesis via DAP pathway; DL-2,6-diaminopimelate from LL-2,6-diaminopimelate: step 1/1. Functionally, catalyzes the stereoinversion of LL-2,6-diaminopimelate (L,L-DAP) to meso-diaminopimelate (meso-DAP), a precursor of L-lysine and an essential component of the bacterial peptidoglycan. The polypeptide is Diaminopimelate epimerase (Rhodococcus erythropolis (strain PR4 / NBRC 100887)).